The sequence spans 317 residues: (2S)-3-sulfopropanediol dehydratase activating enzyme (317 aa).

Residues 18-306 (HDGPGLRTEL…QMLAEYFNQR (289 aa)) form the Radical SAM core domain. [4Fe-4S] cluster-binding residues include C32, C36, C39, C58, C64, C67, C71, C92, C95, C98, and C102. Residue 38 to 40 (WCS) coordinates S-adenosyl-L-methionine. 2 consecutive 4Fe-4S ferredoxin-type domains span residues 49–82 (AQVGVYKTKCISYKKCAACEETCPQENILQFTRG) and 83–112 (KLTSIERHDCTNCLACHNACPSDAIKLWGK). Residues G142 and 191-193 (DIK) contribute to the S-adenosyl-L-methionine site.

Belongs to the organic radical-activating enzymes family. [4Fe-4S] cluster serves as cofactor.

The catalysed reaction is glycyl-[protein] + reduced [flavodoxin] + S-adenosyl-L-methionine = glycin-2-yl radical-[protein] + semiquinone [flavodoxin] + 5'-deoxyadenosine + L-methionine + H(+). It functions in the pathway organosulfur degradation; alkanesulfonate degradation. In terms of biological role, involved in the degradation of the organosulfur compound 2(S)-dihydroxypropanesulfonate (DHPS). Catalyzes activation of the (2S)-3-sulfopropanediol dehydratase HpfG under anaerobic conditions by generation of an organic free radical on a glycine residue. The protein is (2S)-3-sulfopropanediol dehydratase activating enzyme of Klebsiella oxytoca.